The primary structure comprises 295 residues: Phosphoserine phosphatase, chloroplastic (295 aa).

A chloroplast-targeting transit peptide spans 1–54; the sequence is MEALTTSRVVPVQVPCRKLSSLFANFSCLELRRYPCRGLVSIMNHPKLLRPVTA. Asp-89 (nucleophile) is an active-site residue. Asp-89 and Asp-91 together coordinate Mg(2+). Catalysis depends on Asp-91, which acts as the Proton donor. Substrate-binding positions include Glu-98, Arg-134, 178 to 179, and Lys-227; that span reads SG. Residue Asp-248 participates in Mg(2+) binding.

Belongs to the HAD-like hydrolase superfamily. SerB family. Requires Mg(2+) as cofactor. Ubiquitous. Mainly expressed in shoot and root meristems, vasculature, pollen, anthers, carpels and seeds.

The protein resides in the plastid. Its subcellular location is the chloroplast. It carries out the reaction O-phospho-L-serine + H2O = L-serine + phosphate. The enzyme catalyses O-phospho-D-serine + H2O = D-serine + phosphate. It functions in the pathway amino-acid biosynthesis; L-serine biosynthesis; L-serine from 3-phospho-D-glycerate: step 3/3. Approximately 60% inhibition of PSP activity is observed in presence of 10 mM serine. In terms of biological role, catalyzes the last step in the plastidial phosphorylated pathway of serine biosynthesis (PPSB). The reaction mechanism proceeds via the formation of a phosphoryl-enzyme intermediates. Required for embryo, pollen and root development. May be required preferentially for serine biosynthesis in non-photosynthetic tissues. This Arabidopsis thaliana (Mouse-ear cress) protein is Phosphoserine phosphatase, chloroplastic (PSP).